The primary structure comprises 279 residues: Energy-coupling factor transporter ATP-binding protein EcfA1 (279 aa).

One can recognise an ABC transporter domain in the interval Ile6–Asp240. Gly40–Ser47 serves as a coordination point for ATP.

It belongs to the ABC transporter superfamily. Energy-coupling factor EcfA family. Forms a stable energy-coupling factor (ECF) transporter complex composed of 2 membrane-embedded substrate-binding proteins (S component), 2 ATP-binding proteins (A component) and 2 transmembrane proteins (T component).

The protein localises to the cell membrane. In terms of biological role, ATP-binding (A) component of a common energy-coupling factor (ECF) ABC-transporter complex. Unlike classic ABC transporters this ECF transporter provides the energy necessary to transport a number of different substrates. The polypeptide is Energy-coupling factor transporter ATP-binding protein EcfA1 (Levilactobacillus brevis (strain ATCC 367 / BCRC 12310 / CIP 105137 / JCM 1170 / LMG 11437 / NCIMB 947 / NCTC 947) (Lactobacillus brevis)).